A 430-amino-acid polypeptide reads, in one-letter code: Adenosylhomocysteinase (430 aa).

Substrate is bound by residues Thr56, Asp131, and Glu156. Thr157–Thr159 serves as a coordination point for NAD(+). The substrate site is built by Lys186 and Asp190. NAD(+) contacts are provided by residues Asn191, Gly220 to Gly225, Glu243, Asn278, Ile299 to His301, and Asn344.

Belongs to the adenosylhomocysteinase family. NAD(+) serves as cofactor.

It is found in the cytoplasm. The catalysed reaction is S-adenosyl-L-homocysteine + H2O = L-homocysteine + adenosine. The protein operates within amino-acid biosynthesis; L-homocysteine biosynthesis; L-homocysteine from S-adenosyl-L-homocysteine: step 1/1. Functionally, may play a key role in the regulation of the intracellular concentration of adenosylhomocysteine. This chain is Adenosylhomocysteinase, found in Halorhodospira halophila (strain DSM 244 / SL1) (Ectothiorhodospira halophila (strain DSM 244 / SL1)).